Consider the following 148-residue polypeptide: Large ribosomal subunit protein bL9 (148 aa).

Belongs to the bacterial ribosomal protein bL9 family.

Its function is as follows. Binds to the 23S rRNA. The protein is Large ribosomal subunit protein bL9 of Lysinibacillus sphaericus (strain C3-41).